Here is a 147-residue protein sequence, read N- to C-terminus: UPF0306 protein YhbP (147 aa).

It belongs to the UPF0306 family.

The polypeptide is UPF0306 protein YhbP (Salmonella agona (strain SL483)).